Reading from the N-terminus, the 111-residue chain is Putative pterin-4-alpha-carbinolamine dehydratase (111 aa).

This sequence belongs to the pterin-4-alpha-carbinolamine dehydratase family.

It catalyses the reaction (4aS,6R)-4a-hydroxy-L-erythro-5,6,7,8-tetrahydrobiopterin = (6R)-L-erythro-6,7-dihydrobiopterin + H2O. The sequence is that of Putative pterin-4-alpha-carbinolamine dehydratase from Marinobacter nauticus (strain ATCC 700491 / DSM 11845 / VT8) (Marinobacter aquaeolei).